Reading from the N-terminus, the 202-residue chain is Glycoprotein U22 (202 aa).

Residues 1-20 (MVPQGCSLVWVSALYVSVIA) form the signal peptide. Residues asparagine 54, asparagine 107, asparagine 112, and asparagine 125 are each glycosylated (N-linked (GlcNAc...) asparagine; by host). Residues 172–192 (FVYYCISVYLFAVVVLCSCWF) form a helical membrane-spanning segment.

The protein resides in the membrane. The sequence is that of Glycoprotein U22 (U22) from Homo sapiens (Human).